We begin with the raw amino-acid sequence, 147 residues long: Large ribosomal subunit protein uL16 (147 aa).

A compositionally biased stretch (basic residues) spans 1-16; the sequence is MLMPKRVKRRRVHRGR. Positions 1 to 20 are disordered; sequence MLMPKRVKRRRVHRGRMTGQ.

Belongs to the universal ribosomal protein uL16 family. In terms of assembly, part of the 50S ribosomal subunit.

Functionally, binds 23S rRNA and is also seen to make contacts with the A and possibly P site tRNAs. The sequence is that of Large ribosomal subunit protein uL16 from Alkaliphilus metalliredigens (strain QYMF).